The primary structure comprises 893 residues: Probable ion channel CASTOR (893 aa).

The interval 1–94 (MPLDPDSSPA…APRRRDPRYA (94 aa)) is disordered. Over residues 65-85 (PLPPPEQQKQQQPPPTTPPPA) the composition is skewed to pro residues. A helical transmembrane segment spans residues 132–152 (TLRWSGMVSVAAIVLCFSSLV). Positions 156-178 (SSLHDQVHHLKAQLAEATTKLQS) form a coiled coil. 3 helical membrane passes run 210–230 (LLLSLSTLYAPLLILKYMDLF), 266–286 (LVLLVATLLLIGLGGLALYGV), and 318–338 (LVSVSISIGGMLVFAMMLGLV). RCK N-terminal domains are found at residues 359-500 (QSHT…ETVV) and 619-792 (PERI…DYVL). Positions 389-415 (TIVVMAEKDKEEMEADIAKMEFDLKGT) form a coiled coil.

Belongs to the castor/pollux (TC 1.A.1.23) family. As to expression, expressed in roots, leaves, stems and panicles.

It is found in the nucleus membrane. Required for mycorrhizal symbiosis. The protein is Probable ion channel CASTOR of Oryza sativa subsp. japonica (Rice).